The primary structure comprises 266 residues: 3-methyl-2-oxobutanoate hydroxymethyltransferase 2 (266 aa).

2 residues coordinate Mg(2+): D45 and D84. 3-methyl-2-oxobutanoate-binding positions include 45–46 (DS), D84, and K112. A Mg(2+)-binding site is contributed by E114. E181 functions as the Proton acceptor in the catalytic mechanism.

This sequence belongs to the PanB family. As to quaternary structure, homodecamer; pentamer of dimers. The cofactor is Mg(2+).

It localises to the cytoplasm. The catalysed reaction is 3-methyl-2-oxobutanoate + (6R)-5,10-methylene-5,6,7,8-tetrahydrofolate + H2O = 2-dehydropantoate + (6S)-5,6,7,8-tetrahydrofolate. The protein operates within cofactor biosynthesis; (R)-pantothenate biosynthesis; (R)-pantoate from 3-methyl-2-oxobutanoate: step 1/2. Catalyzes the reversible reaction in which hydroxymethyl group from 5,10-methylenetetrahydrofolate is transferred onto alpha-ketoisovalerate to form ketopantoate. This Pseudomonas aeruginosa (strain ATCC 15692 / DSM 22644 / CIP 104116 / JCM 14847 / LMG 12228 / 1C / PRS 101 / PAO1) protein is 3-methyl-2-oxobutanoate hydroxymethyltransferase 2.